A 366-amino-acid polypeptide reads, in one-letter code: MKRNYKIAVLPGDGIGPEIMREGYKILRILKSKLSLNIMTQEFDVGGVAIDKYGVALPKKTLQGCRDSHAILFGSIGGPKWEDLPSHLQPERGALLPLRKYFNLFSNLRLARIYSGLEKLSPLKSRISNLGCDILCVRELTGGIYFGDPKGSKVSKSLNCAFDTEVYYQFEIERIAHMAFDLALTRRCKVTSIDKANVLESSMFWRKIVNRISTQYSQVKLSHLYVDNAAMQIIKNPSQFDVLLCSNLFGDILSDECAAITGSIGLLPSASLNDKNFGLYEPAGGSAPDIKGKNIANPIALILSIGMMMRYSFKLYDVADLIDWAVNKTLKLGYRTQDISENNKFINTSSMGDIIAEILANRIHKI.

Residue 78 to 91 participates in NAD(+) binding; that stretch reads GPKWEDLPSHLQPE. Substrate-binding residues include Arg99, Arg109, Arg138, and Asp227. Mg(2+) is bound by residues Asp227, Asp251, and Asp255. 285–297 contacts NAD(+); sequence GSAPDIKGKNIAN.

The protein belongs to the isocitrate and isopropylmalate dehydrogenases family. LeuB type 1 subfamily. As to quaternary structure, homodimer. Mg(2+) serves as cofactor. Mn(2+) is required as a cofactor.

It is found in the cytoplasm. The enzyme catalyses (2R,3S)-3-isopropylmalate + NAD(+) = 4-methyl-2-oxopentanoate + CO2 + NADH. Its pathway is amino-acid biosynthesis; L-leucine biosynthesis; L-leucine from 3-methyl-2-oxobutanoate: step 3/4. Functionally, catalyzes the oxidation of 3-carboxy-2-hydroxy-4-methylpentanoate (3-isopropylmalate) to 3-carboxy-4-methyl-2-oxopentanoate. The product decarboxylates to 4-methyl-2 oxopentanoate. In Buchnera aphidicola subsp. Baizongia pistaciae (strain Bp), this protein is 3-isopropylmalate dehydrogenase.